Consider the following 394-residue polypeptide: Elongation factor Tu (394 aa).

Residues 10 to 205 enclose the tr-type G domain; the sequence is KPHMNVGTIG…TMDSYFDLPE (196 aa). Residues 19-26 are G1; the sequence is GHVDHGKT. Position 19 to 26 (19 to 26) interacts with GTP; that stretch reads GHVDHGKT. Position 26 (threonine 26) interacts with Mg(2+). Residues 61–65 form a G2 region; that stretch reads GITIN. The segment at 82–85 is G3; the sequence is DCPG. GTP contacts are provided by residues 82–86 and 137–140; these read DCPGH and NKLD. The segment at 137 to 140 is G4; sequence NKLD. Residues 173 to 175 are G5; the sequence is SAF.

It belongs to the TRAFAC class translation factor GTPase superfamily. Classic translation factor GTPase family. EF-Tu/EF-1A subfamily. In terms of assembly, monomer.

Its subcellular location is the cytoplasm. It carries out the reaction GTP + H2O = GDP + phosphate + H(+). GTP hydrolase that promotes the GTP-dependent binding of aminoacyl-tRNA to the A-site of ribosomes during protein biosynthesis. This Borrelia hermsii (strain HS1 / DAH) protein is Elongation factor Tu.